Reading from the N-terminus, the 795-residue chain is Phenylalanine--tRNA ligase beta subunit (795 aa).

Residues 39–148 enclose the tRNA-binding domain; the sequence is ADEFHTVVVG…ADAPVGEDYR (110 aa). A B5 domain is found at 401 to 476; the sequence is PKRDGITLRA…RVYGYNSIQA (76 aa). Residues aspartate 454, aspartate 460, glutamate 463, and glutamate 464 each coordinate Mg(2+). The 94-residue stretch at 701-794 folds into the FDX-ACB domain; it reads SRYPSIRRDL…LKSEFNATLR (94 aa).

The protein belongs to the phenylalanyl-tRNA synthetase beta subunit family. Type 1 subfamily. Tetramer of two alpha and two beta subunits. Mg(2+) serves as cofactor.

The protein resides in the cytoplasm. The catalysed reaction is tRNA(Phe) + L-phenylalanine + ATP = L-phenylalanyl-tRNA(Phe) + AMP + diphosphate + H(+). The chain is Phenylalanine--tRNA ligase beta subunit from Idiomarina loihiensis (strain ATCC BAA-735 / DSM 15497 / L2-TR).